A 201-amino-acid polypeptide reads, in one-letter code: Orotate phosphoribosyltransferase (201 aa).

Glutamate 113–serine 121 serves as a coordination point for 5-phospho-alpha-D-ribose 1-diphosphate. Positions 117 and 145 each coordinate orotate.

This sequence belongs to the purine/pyrimidine phosphoribosyltransferase family. PyrE subfamily. Homodimer. The cofactor is Mg(2+).

The catalysed reaction is orotidine 5'-phosphate + diphosphate = orotate + 5-phospho-alpha-D-ribose 1-diphosphate. It functions in the pathway pyrimidine metabolism; UMP biosynthesis via de novo pathway; UMP from orotate: step 1/2. Its function is as follows. Catalyzes the transfer of a ribosyl phosphate group from 5-phosphoribose 1-diphosphate to orotate, leading to the formation of orotidine monophosphate (OMP). This is Orotate phosphoribosyltransferase from Helicobacter pylori (strain HPAG1).